A 502-amino-acid chain; its full sequence is Lysine--tRNA ligase (502 aa).

Mg(2+)-binding residues include glutamate 403 and glutamate 410.

This sequence belongs to the class-II aminoacyl-tRNA synthetase family. Homodimer. Mg(2+) is required as a cofactor.

The protein resides in the cytoplasm. It carries out the reaction tRNA(Lys) + L-lysine + ATP = L-lysyl-tRNA(Lys) + AMP + diphosphate. The chain is Lysine--tRNA ligase from Synechococcus sp. (strain CC9605).